Reading from the N-terminus, the 497-residue chain is 3-octaprenyl-4-hydroxybenzoate carboxy-lyase (497 aa).

Asn175 provides a ligand contact to Mn(2+). Prenylated FMN contacts are provided by residues Ile178–Arg180, Arg192–Leu194, and Arg197–Gly198. Residue Glu241 participates in Mn(2+) binding. The Proton donor role is filled by Asp290.

It belongs to the UbiD family. In terms of assembly, homohexamer. Prenylated FMN serves as cofactor. Requires Mn(2+) as cofactor.

The protein resides in the cell membrane. It carries out the reaction a 4-hydroxy-3-(all-trans-polyprenyl)benzoate + H(+) = a 2-(all-trans-polyprenyl)phenol + CO2. It functions in the pathway cofactor biosynthesis; ubiquinone biosynthesis. Catalyzes the decarboxylation of 3-octaprenyl-4-hydroxy benzoate to 2-octaprenylphenol, an intermediate step in ubiquinone biosynthesis. The polypeptide is 3-octaprenyl-4-hydroxybenzoate carboxy-lyase (Shigella boydii serotype 4 (strain Sb227)).